A 258-amino-acid chain; its full sequence is ProSAAS (258 aa).

The N-terminal stretch at 1–33 (MAGSPLLCGPRAGGVGILVLLLLGLLRLPPTLS) is a signal peptide. A proSAAS(1-180) region spans residues 34–213 (ARPVKEPRSL…SSEPEAAPAP (180 aa)). Disordered regions lie at residues 156 to 188 (PAPA…TPDV), 204 to 230 (SSEP…EVPP), and 239 to 258 (RVKR…LLPP). Over residues 177–188 (DVEDAGDETPDV) the composition is skewed to acidic residues. Residues 204 to 213 (SSEPEAAPAP) show a composition bias toward low complexity. Positions 219-258 (SVDQDLGPEVPPENVLGALLRVKRLENPSPQAPARRLLPP) are C-terminal inhibitory domain; interacts with PCSK1. The Sufficient for inhibition of PCSK1 signature appears at 237-242 (LLRVKR).

Interacts via the C-terminal inhibitory domain with PCSK1 66 kDa form. Post-translationally, proteolytically cleaved in the Golgi. Little SAAS, PEN, PEN-20 and Big LEN are the major processed peptides in proSAAS-overexpressing AtT-20 pituitary corticotropic cell line. As to expression, expressed in brain (mostly hypothalamus and pituitary) and gut. Expressed in trigeminal ganglia and neuroendocrine cell lines. Expressed in pancreas, spinal cord and brain (most abundant in striatum, hippocampus, pons and medulla, and cortex) (at protein level).

The protein resides in the secreted. The protein localises to the golgi apparatus. It is found in the trans-Golgi network. May function in the control of the neuroendocrine secretory pathway. Proposed be a specific endogenous inhibitor of PCSK1. ProSAAS and Big PEN-LEN, both containing the C-terminal inhibitory domain, but not the processed peptides reduce PCSK1 activity in the endoplasmic reticulum and Golgi. It reduces the activity of the 87 kDa form but not the autocatalytically derived 66 kDa form of PCSK1. Subsequent processing of proSAAS may eliminate the inhibition. Slows down convertase-mediated processing of proopiomelanocortin and proenkephalin. May control the intracellular timing of PCSK1 rather than its total level of activity. In terms of biological role, endogenous ligand for GPR171. Neuropeptide involved in the regulation of feeding. Its function is as follows. Endogenous ligand for GPR171. Neuropeptide involved in the regulation of feeding. The protein is ProSAAS (Pcsk1n) of Mus musculus (Mouse).